A 434-amino-acid polypeptide reads, in one-letter code: Asparagine--tRNA ligase (434 aa).

This sequence belongs to the class-II aminoacyl-tRNA synthetase family. In terms of assembly, homodimer.

It is found in the cytoplasm. It carries out the reaction tRNA(Asn) + L-asparagine + ATP = L-asparaginyl-tRNA(Asn) + AMP + diphosphate + H(+). In Oenococcus oeni (strain ATCC BAA-331 / PSU-1), this protein is Asparagine--tRNA ligase.